A 390-amino-acid polypeptide reads, in one-letter code: Homoserine O-succinyltransferase (390 aa).

Residues 59–369 (NAVLVCHALN…PHGHDAFLLD (311 aa)) form the AB hydrolase-1 domain. Serine 165 (nucleophile) is an active-site residue. Substrate is bound at residue arginine 235. Catalysis depends on residues aspartate 330 and histidine 363. Substrate is bound at residue aspartate 364.

The protein belongs to the AB hydrolase superfamily. MetX family. Homodimer.

It localises to the cytoplasm. The catalysed reaction is L-homoserine + succinyl-CoA = O-succinyl-L-homoserine + CoA. It functions in the pathway amino-acid biosynthesis; L-methionine biosynthesis via de novo pathway; O-succinyl-L-homoserine from L-homoserine: step 1/1. Transfers a succinyl group from succinyl-CoA to L-homoserine, forming succinyl-L-homoserine. The chain is Homoserine O-succinyltransferase from Cupriavidus pinatubonensis (strain JMP 134 / LMG 1197) (Cupriavidus necator (strain JMP 134)).